Reading from the N-terminus, the 239-residue chain is Ribosomal RNA small subunit methyltransferase G (239 aa).

S-adenosyl-L-methionine contacts are provided by residues G78, F83, 129-130, and R148; that span reads AE.

The protein belongs to the methyltransferase superfamily. RNA methyltransferase RsmG family.

Its subcellular location is the cytoplasm. Specifically methylates the N7 position of a guanine in 16S rRNA. This chain is Ribosomal RNA small subunit methyltransferase G, found in Desulfitobacterium hafniense (strain Y51).